The following is a 226-amino-acid chain: Cytidylate kinase (226 aa).

12-20 lines the ATP pocket; that stretch reads GPSGAGKGT.

The protein belongs to the cytidylate kinase family. Type 1 subfamily.

Its subcellular location is the cytoplasm. It catalyses the reaction CMP + ATP = CDP + ADP. It carries out the reaction dCMP + ATP = dCDP + ADP. The chain is Cytidylate kinase from Xanthomonas campestris pv. campestris (strain B100).